The chain runs to 343 residues: Protein RecA (343 aa).

66-73 (GPESSGKT) contributes to the ATP binding site.

It belongs to the RecA family.

Its subcellular location is the cytoplasm. In terms of biological role, can catalyze the hydrolysis of ATP in the presence of single-stranded DNA, the ATP-dependent uptake of single-stranded DNA by duplex DNA, and the ATP-dependent hybridization of homologous single-stranded DNAs. It interacts with LexA causing its activation and leading to its autocatalytic cleavage. This Nitrosomonas eutropha (strain DSM 101675 / C91 / Nm57) protein is Protein RecA.